The following is a 168-amino-acid chain: MRALLCSHRLLPLSSLSRTTVKTKSHNPKTLYPNNKPRWESKLHAGPKGFQSSRTSEKPGRPDPDPEDDPPIPQEVFERMMGRIVVSVGTPLGLGVAILKVLEVLKDRNVWDVPLWVPYLTTLVTFGSSALGIAYGSLSTNLDPAKTNSLFGLKEAKENWVEMWKEDQ.

The interval 18–73 (RTTVKTKSHNPKTLYPNNKPRWESKLHAGPKGFQSSRTSEKPGRPDPDPEDDPPIP) is disordered. The segment covering 55 to 64 (TSEKPGRPDP) has biased composition (basic and acidic residues). The next 2 membrane-spanning stretches (helical) occupy residues 84-104 (IVVS…VLEV) and 113-133 (VPLW…ALGI).

It is found in the membrane. This is an uncharacterized protein from Arabidopsis thaliana (Mouse-ear cress).